The primary structure comprises 608 residues: Nuclear protein localization protein 4 homolog (608 aa).

A2 bears the N-acetylalanine mark. Position 179 is an N6-acetyllysine (K179). The MPN domain occupies 226–363; sequence IMFENHTVAD…MCRLSPDGHF (138 aa). The RanBP2-type zinc finger occupies 580–608; that stretch reads TAAMWACQHCTFMNQPGTGHCEMCSLPRT.

This sequence belongs to the NPL4 family. Heterodimer with UFD1. The heterodimer binds ubiquitinated proteins. The heterodimer binds to VCP and inhibits Golgi membrane fusion. Interacts with ZFAND2B; probably through VCP. As to expression, expressed at highest levels in brain, heart, skeletal muscle, kidney and fetal liver.

It localises to the cytoplasm. The protein localises to the cytosol. It is found in the endoplasmic reticulum. The protein resides in the nucleus. It functions in the pathway protein degradation; proteasomal ubiquitin-dependent pathway. The ternary complex containing UFD1, VCP and NPLOC4 binds ubiquitinated proteins and is necessary for the export of misfolded proteins from the ER to the cytoplasm, where they are degraded by the proteasome. The NPLOC4-UFD1-VCP complex regulates spindle disassembly at the end of mitosis and is necessary for the formation of a closed nuclear envelope. Acts as a negative regulator of type I interferon production via the complex formed with VCP and UFD1, which binds to RIGI and recruits RNF125 to promote ubiquitination and degradation of RIGI. This chain is Nuclear protein localization protein 4 homolog (NPLOC4), found in Homo sapiens (Human).